The primary structure comprises 47 residues: Defensin NsD7 (47 aa).

Cystine bridges form between C3-C47, C14-C34, C20-C41, and C24-C43. Residues K4, H33, K36, and R39 each coordinate a 1,2-diacyl-sn-glycero-3-phosphate.

Belongs to the DEFL family. In the presence of phosphatidic acid (PA), forms right-handed double helices which tend to bundle into fibrils. Each helix is a repetition of dimers containing 2 bound molecules of PA per dimer. Dimers are arranged orthogonally in a tip-to-tip configuration with 1 molecule of PA located at the dimer contact interface. Association of 2 helices to form a double helix depends on intercalating isoleucine residues Ile-15 and Ile-37. Bundling of double helices into fibrils depends on Arg-26.

It localises to the vacuole. Plant defense peptide. Disrupts membranes containing phosphatidic acid (PA) via a PA-dependent oligomerization process. This chain is Defensin NsD7, found in Nicotiana suaveolens (Australian tobacco).